A 225-amino-acid polypeptide reads, in one-letter code: UPF0758 protein BCB4264_A4572 (225 aa).

The region spanning 103 to 225 is the MPN domain; that stretch reads SIRSPEDCAK…FVSLKEKGHI (123 aa). Zn(2+) is bound by residues H174, H176, and D187. Residues 174–187 carry the JAMM motif motif; it reads HNHPSGDPTPSRED.

This sequence belongs to the UPF0758 family.

The sequence is that of UPF0758 protein BCB4264_A4572 from Bacillus cereus (strain B4264).